Here is a 412-residue protein sequence, read N- to C-terminus: Cytochrome P450-SOY (412 aa).

The segment covering 1–25 has biased composition (polar residues); sequence MTESTTDPARQNLDPTSPAPATSFP. Positions 1–38 are disordered; that stretch reads MTESTTDPARQNLDPTSPAPATSFPQDRGCPYHPPAGY. C361 is a heme binding site.

It belongs to the cytochrome P450 family. The cofactor is heme.

It is found in the cytoplasm. The polypeptide is Cytochrome P450-SOY (cyp105D1) (Streptomyces griseus).